We begin with the raw amino-acid sequence, 419 residues long: Putative zinc metalloprotease SPy_1963/M5005_Spy1674 (419 aa).

Residue histidine 18 participates in Zn(2+) binding. The active site involves glutamate 19. Histidine 22 is a Zn(2+) binding site. Helical transmembrane passes span 169–191 (LITNFAGPMNNFILGIVVFILLV), 301–323 (LAWSRAFTILNALKGLITGFSLN), 343–365 (LESVLSLMAMLSINLGIFNLIPI), and 392–411 (AYITLAGVAIMVVLMIAVTW). Residues 175–274 (GPMNNFILGI…LKTVAVKPQK (100 aa)) enclose the PDZ domain.

Belongs to the peptidase M50B family. It depends on Zn(2+) as a cofactor.

The protein resides in the cell membrane. The protein is Putative zinc metalloprotease SPy_1963/M5005_Spy1674 of Streptococcus pyogenes serotype M1.